The following is a 773-amino-acid chain: Beta-D-xylosidase 3 (773 aa).

Residues 1–23 (MASRNRALFSVSTLFLCFIVCIS) form the signal peptide. A glycan (N-linked (GlcNAc...) asparagine) is linked at Asn-131. Asp-298 is a catalytic residue. Asn-349, Asn-432, and Asn-770 each carry an N-linked (GlcNAc...) asparagine glycan.

Belongs to the glycosyl hydrolase 3 family. Expressed in flowers and siliques, in the early stage of seed formation and not at seed maturation. Detected exclusively in the endosperm of very young seeds when the embryo is at the globular stage.

It localises to the secreted. It is found in the extracellular space. The protein localises to the extracellular matrix. The catalysed reaction is Hydrolysis of terminal non-reducing alpha-L-arabinofuranoside residues in alpha-L-arabinosides.. Functionally, involved in the hydrolysis of arabinan. Can hydrolyze (1,3)-alpha-, (1,2)-alpha-linked side group residues and non-reducing terminal L-arabinofuranose residues of debranched (1,5)-alpha-L-arabinan backbone. Also acts as a beta-D-xylosidase, releasing D-xylose from arabinoxylan and xylan. This chain is Beta-D-xylosidase 3 (BXL3), found in Arabidopsis thaliana (Mouse-ear cress).